A 300-amino-acid chain; its full sequence is Estradiol 17-beta-dehydrogenase 11 (300 aa).

The first 18 residues, 1-18, serve as a signal peptide directing secretion; that stretch reads MKILLDLLLLLPLLIVCC. 40-67 lines the NADP(+) pocket; that stretch reads LITGAGHGIGRLTAYEFAKLKSKLVLWD. S172 contributes to the substrate binding site. Y185 acts as the Proton acceptor in catalysis. K189 serves as a coordination point for NADP(+).

The protein belongs to the short-chain dehydrogenases/reductases (SDR) family. 17-beta-HSD 3 subfamily.

It localises to the endoplasmic reticulum. It is found in the lipid droplet. It catalyses the reaction 17beta-estradiol + NAD(+) = estrone + NADH + H(+). The enzyme catalyses 17beta-estradiol + NADP(+) = estrone + NADPH + H(+). In terms of biological role, can convert androstan-3-alpha,17-beta-diol (3-alpha-diol) to androsterone in vitro, suggesting that it may participate in androgen metabolism during steroidogenesis. May act by metabolizing compounds that stimulate steroid synthesis and/or by generating metabolites that inhibit it. Has no activity toward DHEA (dehydroepiandrosterone), or A-dione (4-androste-3,17-dione), and only a slight activity toward testosterone to A-dione. In Macaca fascicularis (Crab-eating macaque), this protein is Estradiol 17-beta-dehydrogenase 11 (HSD17B11).